Reading from the N-terminus, the 680-residue chain is Dihydroxyacetone phosphate acyltransferase (680 aa).

Phosphoserine is present on residues serine 12 and serine 17. An HXXXXD motif motif is present at residues 162–167 (HRSYID). Lysine 643 is modified (N6-acetyllysine). The Microbody targeting signal signature appears at 678–680 (AKL).

This sequence belongs to the GPAT/DAPAT family. Part of a heterotrimeric complex composed of GNPAT, AGPS and a modified form of GNPAT.

It localises to the peroxisome membrane. The catalysed reaction is dihydroxyacetone phosphate + an acyl-CoA = a 1-acylglycerone 3-phosphate + CoA. It catalyses the reaction dihydroxyacetone phosphate + hexadecanoyl-CoA = 1-hexadecanoylglycerone 3-phosphate + CoA. Its pathway is membrane lipid metabolism; glycerophospholipid metabolism. Its function is as follows. Dihydroxyacetonephosphate acyltransferase catalyzing the first step in the biosynthesis of plasmalogens, a subset of phospholipids that differ from other glycerolipids by having an alkyl chain attached through a vinyl ether linkage at the sn-1 position of the glycerol backbone, and which unique physical properties have an impact on various aspects of cell signaling and membrane biology. The protein is Dihydroxyacetone phosphate acyltransferase of Bos taurus (Bovine).